The primary structure comprises 338 residues: Probable cytosolic iron-sulfur protein assembly protein Ciao1 (338 aa).

WD repeat units lie at residues 12–51, 58–97, 102–141, 147–186, 193–232, 234–252, 253–291, and 302–338; these read GHRG…RWVP, GHTR…FECN, GHEN…EYEC, THSQ…SDWS, SHDS…NEFG, ACPD…LSGF, HSRA…PANE, and AHSQ…EDDE.

Belongs to the WD repeat CIA1 family.

In terms of biological role, essential component of the cytosolic iron-sulfur (Fe/S) protein assembly machinery. Required for the maturation of extramitochondrial Fe/S proteins. This is Probable cytosolic iron-sulfur protein assembly protein Ciao1 from Culex quinquefasciatus (Southern house mosquito).